A 221-amino-acid polypeptide reads, in one-letter code: Jacalin-related lectin 47 (221 aa).

2 Jacalin-type lectin domains span residues 1–64 (MDSN…YYYP) and 71–217 (SEKL…HVLP).

The protein belongs to the jacalin lectin family.

This is Jacalin-related lectin 47 (JAL47) from Arabidopsis thaliana (Mouse-ear cress).